The following is a 196-amino-acid chain: HTH-type transcriptional regulator UidR (196 aa).

In terms of domain architecture, HTH tetR-type spans Gln-10–Ala-70. The H-T-H motif DNA-binding region spans Ser-33–Phe-52.

Its function is as follows. Repressor for the uidRABC (gusRABC) operon. This Escherichia coli O157:H7 protein is HTH-type transcriptional regulator UidR (uidR).